Consider the following 1111-residue polypeptide: MSEILTDDQVANLIALLRADVSIDTKVQQVTVVKSSIKQHMVPESCIVPVFEALHLASSSQHALLVNAGFTALNHLFTRLVRQDPRSLTKEGTRALPLIVEKLGDQKEKFRQLASQALATLYKVAPVEVERSVRNIAMVGKNARAKEASLHWLLQMHQEQGLQFRAYVPTMMELLEDADGMVRDVAKSTVIELFRNAPGPAKSDLKKQLKNFKVRPAIEQAIVKELNPTSSAPASQPDPESVEPSYVNTTRELDEIFREMHGYFEGKETEQNWLKREESVTKLRRLIAGNAATDFHDQFLTGLRALLDGIIKAVVSLRTSLSKEGCSLIQEIAKAYGPAMDPMVEILMQTFIKLTAATKKIASAQANTTVDTIISKVTYNNRIMQHVWLACQDKNVQPRLYASGWLRTLLAKEAHHKNHVEHTGGLDLIEKCIKKGLSDANPGVREKMRATYWMFAGVWPAKAEAIMNGLDSTAARLLQNDPNNPKSPKKPEGGARPGLGLSKSTMGTSKPSVREAMMAQKRAMTTKTVPTRPGSAMSHFSPAKSVSSLSQPPPAAPTVRARPESAMLGSTGGISGAPMRPGRRKVETARPATAGPYSVRSHDQPSAEQTSPPSRPKPKAVTPKSITSSPKRTAPKMARSATVSGEPQLPTPTRAGSPKVMGSPRATPSRSVPPTVAPPSSSPSKRHEDFSLVVPIMTSSASPPREEQRFVKPVEDEDMDMSPSDTPSKPGQHSPDAPASPPQTVAAVDEEPISITTPLRSVEVAVPSPPSASRSLEVYEDPLTREQLTTPKLIFGPVLEDRSVNEDAAILQQAVRQQQEQQQQQQQQNGAANGMALSPEKLKQNQRLLDSGISKVQQRSLDVHGFRKLQGIIRDSDTKPTTGTALLTDDKFDALVAGLFDFLESPLTNLAPEKTQDVKAQVLATIKLLLKRTRASFQPHVSRGLESLLRARAVYEGRTHIVSGLELLAADLAGLGDASEIVLVLCRMLSDLDVDSAAHAAAGGVGGGAGRSLSMGLHVLREMLDARGAAFVPSDAELAALAALAGGCLESLESAVRMDAVLLCVALHARVGDARFWEALKGVKEDPKSLITYYIVKRQREVGAAGVGQAA.

2 HEAT repeats span residues Ala-95–Val-133 and Tyr-167–Leu-205. Disordered regions lie at residues Glu-225–Ser-245 and Arg-476–Glu-751. Residues Ser-502–Pro-511 show a composition bias toward polar residues. A compositionally biased stretch (basic and acidic residues) spans Pro-704–Val-714.

This sequence belongs to the CLASP family. Interacts with microtubules.

The protein resides in the cytoplasm. The protein localises to the cytoskeleton. It is found in the nucleus. Its subcellular location is the spindle. Functionally, microtubule binding protein that promotes the stabilization of dynamic microtubules. Required for mitotic spindle formation. This Chaetomium globosum (strain ATCC 6205 / CBS 148.51 / DSM 1962 / NBRC 6347 / NRRL 1970) (Soil fungus) protein is Protein STU1 (STU1).